The sequence spans 351 residues: N-acetyl-gamma-glutamyl-phosphate reductase (351 aa).

Cys150 is a catalytic residue.

The protein belongs to the NAGSA dehydrogenase family. Type 1 subfamily.

The protein localises to the cytoplasm. It catalyses the reaction N-acetyl-L-glutamate 5-semialdehyde + phosphate + NADP(+) = N-acetyl-L-glutamyl 5-phosphate + NADPH + H(+). It participates in amino-acid biosynthesis; L-arginine biosynthesis; N(2)-acetyl-L-ornithine from L-glutamate: step 3/4. Catalyzes the NADPH-dependent reduction of N-acetyl-5-glutamyl phosphate to yield N-acetyl-L-glutamate 5-semialdehyde. The polypeptide is N-acetyl-gamma-glutamyl-phosphate reductase (Heliobacterium modesticaldum (strain ATCC 51547 / Ice1)).